The primary structure comprises 257 residues: ECF RNA polymerase sigma factor SigE (257 aa).

Positions 87–153 (LVRQHADRVY…FLDMVRRRAR (67 aa)) are sigma-70 factor domain-2. A Polymerase core binding motif is present at residues 111-114 (DLTQ). The tract at residues 186 to 236 (LQAALASLPPEFRAAVVLCDIEGLSYEEIGATLGVKLGTVRSRIHRGRQAL) is sigma-70 factor domain-4. The segment at residues 211 to 230 (YEEIGATLGVKLGTVRSRIH) is a DNA-binding region (H-T-H motif).

The protein belongs to the sigma-70 factor family. ECF subfamily. In terms of assembly, interacts transiently with the RNA polymerase catalytic core formed by RpoA, RpoB, RpoC and RpoZ (2 alpha, 1 beta, 1 beta' and 1 omega subunit) to form the RNA polymerase holoenzyme that can initiate transcription. Interacts (via sigma-70 factor domain 4) with cognate anti-sigma-E factor RseA under reducing conditions, which stops the sigma factor from functioning.

In terms of biological role, sigma factors are initiation factors that promote the attachment of RNA polymerase to specific initiation sites and are then released. Extracytoplasmic function (ECF) sigma factors are held in an inactive form by an anti-sigma factor until released. Responds to surface stress (H(2)O(2)). The protein is ECF RNA polymerase sigma factor SigE (sigE) of Mycobacterium tuberculosis (strain ATCC 35801 / TMC 107 / Erdman).